A 382-amino-acid polypeptide reads, in one-letter code: L-arabinitol 4-dehydrogenase (382 aa).

Zn(2+)-binding residues include Cys55, His80, Glu81, Cys110, Cys113, Cys116, Cys124, and Glu165. NAD(+) contacts are provided by residues 192-193 (PI), Asp213, Arg218, Ile293, and 317-319 (QYR).

Belongs to the zinc-containing alcohol dehydrogenase family. As to quaternary structure, homotetramer. Zn(2+) serves as cofactor.

It catalyses the reaction L-arabinitol + NAD(+) = L-xylulose + NADH + H(+). It participates in carbohydrate degradation; L-arabinose degradation via L-arabinitol; D-xylulose 5-phosphate from L-arabinose (fungal route): step 2/5. In terms of biological role, catalyzes the NAD-dependent oxidation of L-arabinitol to L-xylulose in the fungal L-arabinose catabolic pathway. L-arabinose catabolism is important for using plant material as a carbon source. Also active on ribitol and xylitol. Not active with NADP as cosubstrate. The polypeptide is L-arabinitol 4-dehydrogenase (ladA) (Aspergillus oryzae (Yellow koji mold)).